We begin with the raw amino-acid sequence, 336 residues long: Speedy protein E1 (336 aa).

Residues 16-50 (GVDPSPPCRSLGWKRKREWSDESEEEPEKELAPEP) are disordered. Positions 36-50 (DESEEEPEKELAPEP) are enriched in acidic residues.

The protein belongs to the Speedy/Ringo family. As to expression, predominantly expressed in testis and heart.

The protein is Speedy protein E1 of Homo sapiens (Human).